Here is a 241-residue protein sequence, read N- to C-terminus: MALNPLEQFKIHTIVELPKLFGHDINFTNSSLFMMISVVSVILFLLLGVRKGAVIPGYLQAAVEYVYDFITSIIESNTGSKGLKHIPLVFTVFTFTLSCNLVGMLPYSFTVTSHVIVTFALSMIVFTYTTIVGFKEKGINFLRILLPEGIPSWLAPMMVFIKLFAYLARPISLSIRLAANMIAGHTIIKVVAGFIMNMHLILTPIPFLFIIALIGFEVFVAILQAYIFTILTCIYLSDAVK.

The next 7 helical transmembrane spans lie at 29 to 49 (NSSLFMMISVVSVILFLLLGV), 86 to 106 (IPLVFTVFTFTLSCNLVGMLP), 114 to 134 (HVIVTFALSMIVFTYTTIVGF), 144 to 164 (ILLPEGIPSWLAPMMVFIKLF), 177 to 197 (LAANMIAGHTIIKVVAGFIMN), 200 to 220 (LILTPIPFLFIIALIGFEVFV), and 221 to 241 (AILQAYIFTILTCIYLSDAVK).

It belongs to the ATPase A chain family. F-type ATPases have 2 components, CF(1) - the catalytic core - and CF(0) - the membrane proton channel. CF(1) has five subunits: alpha(3), beta(3), gamma(1), delta(1), epsilon(1). CF(0) has three main subunits: a(1), b(2) and c(9-12). The alpha and beta chains form an alternating ring which encloses part of the gamma chain. CF(1) is attached to CF(0) by a central stalk formed by the gamma and epsilon chains, while a peripheral stalk is formed by the delta and b chains.

The protein resides in the cell membrane. Its function is as follows. Key component of the proton channel; it plays a direct role in the translocation of protons across the membrane. This is ATP synthase subunit a from Wolbachia sp. subsp. Brugia malayi (strain TRS).